A 261-amino-acid polypeptide reads, in one-letter code: Cytochrome c oxidase subunit 3 (261 aa).

Residues 1-15 (MTHQTHAYHMVNPSP) lie on the Mitochondrial matrix side of the membrane. Residues 16–34 (WPLTGALSALLMTSGLAMW) traverse the membrane as a helical segment. Topologically, residues 35–40 (FHFNSP) are mitochondrial intermembrane. A helical membrane pass occupies residues 41 to 66 (SLLLIGLVTNTLTMYQWWRDIVREGT). Over 67 to 72 (FQGHHT) the chain is Mitochondrial matrix. Residues 73–105 (PIVQKGLRYGMILFIISEVFFFAGFFWAFYHSS) traverse the membrane as a helical segment. Residues 106–128 (LAPTPELGGCWPPTGINPLNPLE) lie on the Mitochondrial intermembrane side of the membrane. Residues 129 to 152 (VPLLNTSVLLASGVSITWAHHSLM) traverse the membrane as a helical segment. Residues 153–155 (EGN) lie on the Mitochondrial matrix side of the membrane. Residues 156–183 (RKNMQQALAITILLGIYFTLLQASEYYE) traverse the membrane as a helical segment. Residues 184 to 190 (TSFTISD) lie on the Mitochondrial intermembrane side of the membrane. Residues 191-223 (GVYGSTFFMATGFHGLHVIIGSTFLTVCLLRQF) form a helical membrane-spanning segment. Over 224–232 (NFHFTSNHH) the chain is Mitochondrial matrix. Residues 233–256 (FGFEAAAWYWHFVDVVWLFLYVSI) form a helical membrane-spanning segment. The Mitochondrial intermembrane segment spans residues 257-261 (YWWGS).

It belongs to the cytochrome c oxidase subunit 3 family. In terms of assembly, component of the cytochrome c oxidase (complex IV, CIV), a multisubunit enzyme composed of 14 subunits. The complex is composed of a catalytic core of 3 subunits MT-CO1, MT-CO2 and MT-CO3, encoded in the mitochondrial DNA, and 11 supernumerary subunits COX4I, COX5A, COX5B, COX6A, COX6B, COX6C, COX7A, COX7B, COX7C, COX8 and NDUFA4, which are encoded in the nuclear genome. The complex exists as a monomer or a dimer and forms supercomplexes (SCs) in the inner mitochondrial membrane with NADH-ubiquinone oxidoreductase (complex I, CI) and ubiquinol-cytochrome c oxidoreductase (cytochrome b-c1 complex, complex III, CIII), resulting in different assemblies (supercomplex SCI(1)III(2)IV(1) and megacomplex MCI(2)III(2)IV(2)).

It localises to the mitochondrion inner membrane. It carries out the reaction 4 Fe(II)-[cytochrome c] + O2 + 8 H(+)(in) = 4 Fe(III)-[cytochrome c] + 2 H2O + 4 H(+)(out). Functionally, component of the cytochrome c oxidase, the last enzyme in the mitochondrial electron transport chain which drives oxidative phosphorylation. The respiratory chain contains 3 multisubunit complexes succinate dehydrogenase (complex II, CII), ubiquinol-cytochrome c oxidoreductase (cytochrome b-c1 complex, complex III, CIII) and cytochrome c oxidase (complex IV, CIV), that cooperate to transfer electrons derived from NADH and succinate to molecular oxygen, creating an electrochemical gradient over the inner membrane that drives transmembrane transport and the ATP synthase. Cytochrome c oxidase is the component of the respiratory chain that catalyzes the reduction of oxygen to water. Electrons originating from reduced cytochrome c in the intermembrane space (IMS) are transferred via the dinuclear copper A center (CU(A)) of subunit 2 and heme A of subunit 1 to the active site in subunit 1, a binuclear center (BNC) formed by heme A3 and copper B (CU(B)). The BNC reduces molecular oxygen to 2 water molecules using 4 electrons from cytochrome c in the IMS and 4 protons from the mitochondrial matrix. In Oryctolagus cuniculus (Rabbit), this protein is Cytochrome c oxidase subunit 3 (MT-CO3).